Here is a 324-residue protein sequence, read N- to C-terminus: Dermonecrotic toxin Hl-PLD1 (324 aa).

An N-terminal signal peptide occupies residues 1–35 (MAHCYYNSKRGCNRVMKTVALVVLISTVMVEESRG). His-50 is an active-site residue. Residues Glu-70 and Asp-72 each coordinate Mg(2+). His-86 (nucleophile) is an active-site residue. Disulfide bonds link Cys-90-Cys-96 and Cys-92-Cys-236. Asp-130 serves as a coordination point for Mg(2+).

This sequence belongs to the arthropod phospholipase D family. Class II subfamily. It depends on Mg(2+) as a cofactor. Expressed by the venom gland.

Its subcellular location is the secreted. It catalyses the reaction an N-(acyl)-sphingosylphosphocholine = an N-(acyl)-sphingosyl-1,3-cyclic phosphate + choline. The enzyme catalyses an N-(acyl)-sphingosylphosphoethanolamine = an N-(acyl)-sphingosyl-1,3-cyclic phosphate + ethanolamine. It carries out the reaction a 1-acyl-sn-glycero-3-phosphocholine = a 1-acyl-sn-glycero-2,3-cyclic phosphate + choline. The catalysed reaction is a 1-acyl-sn-glycero-3-phosphoethanolamine = a 1-acyl-sn-glycero-2,3-cyclic phosphate + ethanolamine. Dermonecrotic toxins cleave the phosphodiester linkage between the phosphate and headgroup of certain phospholipids (sphingolipid and lysolipid substrates), forming an alcohol (often choline) and a cyclic phosphate. This toxin acts on sphingomyelin (SM) with a high activity. It may also act on ceramide phosphoethanolamine (CPE), lysophosphatidylcholine (LPC) and lysophosphatidylethanolamine (LPE), but not on lysophosphatidylserine (LPS), and lysophosphatidylglycerol (LPG). It acts by transphosphatidylation, releasing exclusively cyclic phosphate products as second products. In vivo, shows dermonecrotic activity when intradermally injected into rabbit skin and is lethal to mice. Induces increased vascular permeability, edema, inflammatory response, and platelet aggregation. Does not show hemolytic activity (at up to 50 ug). This Hemiscorpius lepturus (Scorpion) protein is Dermonecrotic toxin Hl-PLD1.